The following is a 518-amino-acid chain: Myosin-binding protein 7 (518 aa).

The GTD-binding domain maps to 69 to 167 (NELELLRETV…ALTFEAQAYK (99 aa)). The disordered stretch occupies residues 276 to 350 (VVGQSPRHQR…DSSEIGDNDM (75 aa)). Residues 291–301 (STGSASSLLGT) are compositionally biased toward low complexity. The segment covering 310–320 (SNDSPRSNNGS) has biased composition (polar residues). Phosphoserine is present on Ser-385. Positions 399 to 431 (EISKLYMRLQALEADRESMRQAIMSMRTEKAQM) form a coiled coil. Residues 458-477 (IIGAFNFISVFKWITSFVFW) traverse the membrane as a helical segment.

As to quaternary structure, interacts with myosin XI-I.

It localises to the endomembrane system. Membrane-anchored myosin receptors that define a distinct, plant-specific transport vesicle compartment. This chain is Myosin-binding protein 7, found in Arabidopsis thaliana (Mouse-ear cress).